Here is a 64-residue protein sequence, read N- to C-terminus: Protein YnhH (64 aa).

The sequence is that of Protein YnhH from Escherichia coli (strain K12).